Consider the following 361-residue polypeptide: Adenosine kinase (361 aa).

Residues 7 to 15 (PKPKKLKVE) carry the Nuclear localization signal motif. An adenosine-binding site is contributed by Asp-34. Mg(2+) is bound at residue Ser-48. Tyr-76 is subject to Phosphotyrosine. Asn-147 lines the Mg(2+) pocket. Gln-305 is a binding site for adenosine. Asp-316 is a catalytic residue. Catalysis depends on Asp-316, which acts as the Proton acceptor.

It belongs to the carbohydrate kinase PfkB family. Monomer. Mg(2+) serves as cofactor. In terms of tissue distribution, widely expressed. Highly expressed in liver, testis, kidney and spleen (at protein level). In brain, expression in most forebrain structures and the cerebellum is higher than in the midbrain and brainstem (at protein level). Major isoform in testis and kidney. Not detected in most brain regions, except in the cerebellum, where it is expressed at a similar level to that of isoform 2 (at protein level). As to expression, major isoform in spleen and in most brain regions, except in the cerebellum, where it is expressed at a similar level to that of isoform 1 (at protein level).

Its subcellular location is the nucleus. The protein localises to the cytoplasm. It carries out the reaction adenosine + ATP = AMP + ADP + H(+). It participates in purine metabolism; AMP biosynthesis via salvage pathway; AMP from adenosine: step 1/1. With respect to regulation, activity is inhibited by 5-iodotubercidin and 5'-amino-5'-deoxyadenosine. Its function is as follows. Catalyzes the phosphorylation of the purine nucleoside adenosine at the 5' position in an ATP-dependent manner. Serves as a potential regulator of concentrations of extracellular adenosine and intracellular adenine nucleotides. In Mus musculus (Mouse), this protein is Adenosine kinase (Adk).